Here is a 148-residue protein sequence, read N- to C-terminus: Ribonuclease pancreatic (148 aa).

Positions 1-25 (MGLEKSLLLLPLLVLVLGCVQPSLG) are cleaved as a signal peptide. The substrate site is built by lysine 32 and arginine 35. Catalysis depends on histidine 37, which acts as the Proton acceptor. 4 cysteine pairs are disulfide-bonded: cysteine 50–cysteine 108, cysteine 64–cysteine 119, cysteine 82–cysteine 134, and cysteine 89–cysteine 96. Residues 65-69 (KPVNT) and lysine 90 each bind substrate. The active-site Proton donor is histidine 143.

It belongs to the pancreatic ribonuclease family. Monomer. Interacts with and forms tight 1:1 complexes with RNH1. Dimerization of two such complexes may occur. Interaction with RNH1 inhibits this protein. In terms of tissue distribution, pancreas.

The protein localises to the secreted. It carries out the reaction an [RNA] containing cytidine + H2O = an [RNA]-3'-cytidine-3'-phosphate + a 5'-hydroxy-ribonucleotide-3'-[RNA].. It catalyses the reaction an [RNA] containing uridine + H2O = an [RNA]-3'-uridine-3'-phosphate + a 5'-hydroxy-ribonucleotide-3'-[RNA].. In terms of biological role, endonuclease that catalyzes the cleavage of RNA on the 3' side of pyrimidine nucleotides. Acts on single-stranded and double-stranded RNA. This chain is Ribonuclease pancreatic (RNASE1), found in Gerbillus nigeriae (Nigerian gerbil).